Consider the following 209-residue polypeptide: Thiamine-phosphate synthase (209 aa).

Residues 36-40 and N68 contribute to the 4-amino-2-methyl-5-(diphosphooxymethyl)pyrimidine site; that span reads QYRDK. The Mg(2+) site is built by D69 and D87. T106 serves as a coordination point for 4-amino-2-methyl-5-(diphosphooxymethyl)pyrimidine. 133 to 135 contacts 2-[(2R,5Z)-2-carboxy-4-methylthiazol-5(2H)-ylidene]ethyl phosphate; that stretch reads SST. Position 136 (K136) interacts with 4-amino-2-methyl-5-(diphosphooxymethyl)pyrimidine. G163 contributes to the 2-[(2R,5Z)-2-carboxy-4-methylthiazol-5(2H)-ylidene]ethyl phosphate binding site.

It belongs to the thiamine-phosphate synthase family. Mg(2+) serves as cofactor.

It catalyses the reaction 2-[(2R,5Z)-2-carboxy-4-methylthiazol-5(2H)-ylidene]ethyl phosphate + 4-amino-2-methyl-5-(diphosphooxymethyl)pyrimidine + 2 H(+) = thiamine phosphate + CO2 + diphosphate. The catalysed reaction is 2-(2-carboxy-4-methylthiazol-5-yl)ethyl phosphate + 4-amino-2-methyl-5-(diphosphooxymethyl)pyrimidine + 2 H(+) = thiamine phosphate + CO2 + diphosphate. It carries out the reaction 4-methyl-5-(2-phosphooxyethyl)-thiazole + 4-amino-2-methyl-5-(diphosphooxymethyl)pyrimidine + H(+) = thiamine phosphate + diphosphate. It participates in cofactor biosynthesis; thiamine diphosphate biosynthesis; thiamine phosphate from 4-amino-2-methyl-5-diphosphomethylpyrimidine and 4-methyl-5-(2-phosphoethyl)-thiazole: step 1/1. Its function is as follows. Condenses 4-methyl-5-(beta-hydroxyethyl)thiazole monophosphate (THZ-P) and 2-methyl-4-amino-5-hydroxymethyl pyrimidine pyrophosphate (HMP-PP) to form thiamine monophosphate (TMP). This Azotobacter vinelandii (strain DJ / ATCC BAA-1303) protein is Thiamine-phosphate synthase.